Reading from the N-terminus, the 96-residue chain is Phosphoribosyl-ATP pyrophosphatase (96 aa).

Belongs to the PRA-PH family.

The protein resides in the cytoplasm. It carries out the reaction 1-(5-phospho-beta-D-ribosyl)-ATP + H2O = 1-(5-phospho-beta-D-ribosyl)-5'-AMP + diphosphate + H(+). It participates in amino-acid biosynthesis; L-histidine biosynthesis; L-histidine from 5-phospho-alpha-D-ribose 1-diphosphate: step 2/9. This is Phosphoribosyl-ATP pyrophosphatase from Methanococcus maripaludis (strain DSM 14266 / JCM 13030 / NBRC 101832 / S2 / LL).